Reading from the N-terminus, the 388-residue chain is Phosphopentomutase (388 aa).

The Mn(2+) site is built by Asp-11, Asp-283, His-288, Asp-324, His-325, and His-336.

The protein belongs to the phosphopentomutase family. Mn(2+) serves as cofactor.

It localises to the cytoplasm. It catalyses the reaction 2-deoxy-alpha-D-ribose 1-phosphate = 2-deoxy-D-ribose 5-phosphate. The catalysed reaction is alpha-D-ribose 1-phosphate = D-ribose 5-phosphate. It functions in the pathway carbohydrate degradation; 2-deoxy-D-ribose 1-phosphate degradation; D-glyceraldehyde 3-phosphate and acetaldehyde from 2-deoxy-alpha-D-ribose 1-phosphate: step 1/2. Its function is as follows. Isomerase that catalyzes the conversion of deoxy-ribose 1-phosphate (dRib-1-P) and ribose 1-phosphate (Rib-1-P) to deoxy-ribose 5-phosphate (dRib-5-P) and ribose 5-phosphate (Rib-5-P), respectively. The sequence is that of Phosphopentomutase from Anaeromyxobacter sp. (strain K).